We begin with the raw amino-acid sequence, 138 residues long: Thyrotropin subunit beta (138 aa).

The first 20 residues, 1–20 (MNAVVLFSVLFALACGQVSS), serve as a signal peptide directing secretion. 6 disulfide bridges follow: C22–C72, C36–C87, C39–C125, C47–C103, C51–C105, and C108–C115. A glycan (N-linked (GlcNAc...) asparagine) is linked at N43. A propeptide spanning residues 133-138 (LGGFSG) is cleaved from the precursor.

Belongs to the glycoprotein hormones subunit beta family. As to quaternary structure, heterodimer of a common alpha chain and a unique beta chain which confers biological specificity to thyrotropin, lutropin, follitropin and gonadotropin.

Its subcellular location is the secreted. Indispensable for the control of thyroid structure and metabolism. The sequence is that of Thyrotropin subunit beta (Tshb) from Rattus norvegicus (Rat).